Here is a 203-residue protein sequence, read N- to C-terminus: VPS4-associated protein 1 (203 aa).

Positions 99-109 are enriched in basic and acidic residues; that stretch reads EKETNNSKDPD. Disordered regions lie at residues 99 to 125 and 171 to 193; these read EKET…AKND and QVNR…EELL. Residues 110 to 120 are compositionally biased toward low complexity; sequence PTTTDSTDTSP. Positions 121-157 form a coiled coil; it reads QAKNDAEILSETKKQYSKILDKVTELQRKNRKYELAK. The span at 171–182 shows a compositional bias: basic and acidic residues; sequence QVNRERYLKEQE.

In terms of assembly, interacts with VPS4.

The protein resides in the cytoplasm. It is found in the endosome. Functionally, VPS4-associated protein involved in trafficking to the vacuole. The sequence is that of VPS4-associated protein 1 (VFA1) from Saccharomyces cerevisiae (strain ATCC 204508 / S288c) (Baker's yeast).